The following is a 274-amino-acid chain: Orotidine 5'-phosphate decarboxylase (274 aa).

Residues D40, 62–64, 93–102, Y227, and R245 each bind substrate; these read KTH and DRKFVDIGNT. K95 acts as the Proton donor in catalysis.

The protein belongs to the OMP decarboxylase family.

It carries out the reaction orotidine 5'-phosphate + H(+) = UMP + CO2. It functions in the pathway pyrimidine metabolism; UMP biosynthesis via de novo pathway; UMP from orotate: step 2/2. The protein is Orotidine 5'-phosphate decarboxylase (URA3) of Coccidioides posadasii (strain RMSCC 757 / Silveira) (Valley fever fungus).